Here is a 454-residue protein sequence, read N- to C-terminus: 5-hydroxytryptamine receptor 3D (454 aa).

The first 24 residues, 1–24 (MQKHSPGPPALALLSQSLLTTGNG), serve as a signal peptide directing secretion. Over 25-232 (DTLIINCPGF…IRRRCRPSPY (208 aa)) the chain is Extracellular. The N-linked (GlcNAc...) asparagine glycan is linked to N66. A helical membrane pass occupies residues 233–253 (VVNFLVPSGILIAIDALSFYL). Residues 254–264 (PLESGNCAPFK) are Cytoplasmic-facing. Residues 265 to 285 (MTVLLGYSVFLLMMNDLLPAT) form a helical membrane-spanning segment. At 286-306 (STSSHASLVAPLALMQTPLPA) the chain is on the extracellular side. Residues 307-327 (GVYFALCLSLMVGSLLETIFI) form a helical membrane-spanning segment. Residues 328-431 (THLLHVATTQ…WVQFSHAMDA (104 aa)) lie on the Cytoplasmic side of the membrane. Residues 363–410 (PQKGNKGPGLTPTHLPGVKEPEVSAGQMPGPGEAELTGGSEWTRAQRE) are disordered. The interval 399–430 (TGGSEWTRAQREHEAQKQHSVELWVQFSHAMD) is HA-stretch; determines single-channel conductance in 5-HT3 receptors. Residues 432 to 452 (LLFRLYLLFMASSIITVICLW) traverse the membrane as a helical segment. The Extracellular portion of the chain corresponds to 453-454 (NT).

It belongs to the ligand-gated ion channel (TC 1.A.9) family. 5-hydroxytryptamine receptor (TC 1.A.9.2) subfamily. HTR3D sub-subfamily. In terms of assembly, forms homopentameric as well as heteropentameric serotonin-activated cation-selective channel complexes with HTR3A. The homomeric complex is not functional. Heteropentameric complexes display properties which resemble that of neuronal serotonin-activated channels in vivo. In terms of tissue distribution, expressed in liver, as well as fetal and adult colon and kidney.

The protein resides in the postsynaptic cell membrane. The protein localises to the cell membrane. The catalysed reaction is Na(+)(in) = Na(+)(out). The enzyme catalyses K(+)(in) = K(+)(out). It catalyses the reaction Ca(2+)(in) = Ca(2+)(out). Forms serotonin (5-hydroxytryptamine/5-HT3)-activated cation-selective channel complexes, which when activated cause fast, depolarizing responses in neurons. The polypeptide is 5-hydroxytryptamine receptor 3D (Homo sapiens (Human)).